A 320-amino-acid polypeptide reads, in one-letter code: Mitochondrial ribosome-associated GTPase 1 (320 aa).

The region spanning leucine 37–proline 209 is the CP-type G domain. GTP contacts are provided by residues asparagine 81–aspartate 84, asparagine 153–serine 158, and glycine 205.

This sequence belongs to the TRAFAC class YlqF/YawG GTPase family. MTG1 subfamily.

It is found in the mitochondrion inner membrane. In terms of biological role, plays a role in the regulation of the mitochondrial ribosome assembly and of translational activity. Displays mitochondrial GTPase activity. The polypeptide is Mitochondrial ribosome-associated GTPase 1 (Ictalurus punctatus (Channel catfish)).